Consider the following 119-residue polypeptide: Defensin-like protein 260 (119 aa).

The N-terminal stretch at 1–24 is a signal peptide; sequence MKIASLKLLLLVSLLFAVTQNGIS. Disulfide bonds link cysteine 44/cysteine 99, cysteine 63/cysteine 79, cysteine 69/cysteine 83, and cysteine 73/cysteine 85.

This sequence belongs to the DEFL family.

The protein resides in the secreted. The polypeptide is Defensin-like protein 260 (Arabidopsis thaliana (Mouse-ear cress)).